A 738-amino-acid polypeptide reads, in one-letter code: ATP-dependent RNA helicase rok1 (738 aa).

Disordered regions lie at residues 1–112 and 145–176; these read MDAF…DEEV and VASE…EQKK. Polar residues predominate over residues 17–29; that stretch reads ATPSSAQSSTRLP. Over residues 92–104 the composition is skewed to basic and acidic residues; sequence SKEEKQEQERSGE. Positions 190 to 218 match the Q motif motif; it reads ELRSKYKISSRLAENIAEQGFTVPTEVQL. The Helicase ATP-binding domain maps to 231 to 447; sequence KAGESVEPDL…KSTIKERKEA (217 aa). Position 244–251 (244–251) interacts with ATP; sequence APTGSGKT. Residues 316-356 form a disordered region; that stretch reads VVEREDEDDDGDDSSSEDGDESSESEHEERPIAKKSKGKAP. The segment covering 319 to 338 has biased composition (acidic residues); that stretch reads REDEDDDGDDSSSEDGDESS. A DEAD box motif is present at residues 394–397; that stretch reads DEAD. One can recognise a Helicase C-terminal domain in the interval 487 to 655; the sequence is GLRQLLHPTA…SIQKWLLDAL (169 aa). The interval 663–738 is disordered; the sequence is KKELKKHGVK…GNESWDGLEN (76 aa). Positions 697–706 are enriched in basic and acidic residues; it reads GFERRIENKK.

It belongs to the DEAD box helicase family. DDX52/ROK1 subfamily. Interacts with the U3 snoRNA and is associated with the 90S and 40S pre-ribosomes.

It localises to the nucleus. The protein resides in the nucleolus. The enzyme catalyses ATP + H2O = ADP + phosphate + H(+). Its function is as follows. ATP-dependent RNA helicase involved in 40S ribosomal subunit biogenesis. Required for the processing and cleavage of 35S pre-rRNA at sites A0, A1, and A2, leading to mature 18S rRNA. This Aspergillus clavatus (strain ATCC 1007 / CBS 513.65 / DSM 816 / NCTC 3887 / NRRL 1 / QM 1276 / 107) protein is ATP-dependent RNA helicase rok1 (rok1).